The sequence spans 359 residues: Small ribosomal subunit biogenesis GTPase RsgA (359 aa).

Residues 101–259 form the CP-type G domain; the sequence is KRKGSQAIAS…LMDNPGIREV (159 aa). GTP is bound by residues 149–152 and 201–209; these read NKKD and GSSGAGKST. Cysteine 284, cysteine 289, histidine 291, and cysteine 297 together coordinate Zn(2+). Residues 331 to 359 are disordered; the sequence is DPEEARKKKQKDKQMSKALQKRLKDKGRK. Basic residues predominate over residues 349–359; it reads LQKRLKDKGRK.

It belongs to the TRAFAC class YlqF/YawG GTPase family. RsgA subfamily. Monomer. Associates with 30S ribosomal subunit, binds 16S rRNA. It depends on Zn(2+) as a cofactor.

It localises to the cytoplasm. Functionally, one of several proteins that assist in the late maturation steps of the functional core of the 30S ribosomal subunit. Helps release RbfA from mature subunits. May play a role in the assembly of ribosomal proteins into the subunit. Circularly permuted GTPase that catalyzes slow GTP hydrolysis, GTPase activity is stimulated by the 30S ribosomal subunit. This Leptospira interrogans serogroup Icterohaemorrhagiae serovar copenhageni (strain Fiocruz L1-130) protein is Small ribosomal subunit biogenesis GTPase RsgA.